The primary structure comprises 380 residues: Cytochrome b (380 aa).

Helical transmembrane passes span 34–54 (FGSL…LLAM), 78–99 (WLIR…YLHI), 114–134 (WNTG…GYVL), and 179–199 (FFAL…IHLT). Heme b-binding residues include His84 and His98. The heme b site is built by His183 and His197. His202 is an a ubiquinone binding site. 4 helical membrane passes run 227–247 (LKDI…ALFS), 289–309 (LGGV…PFLH), 321–341 (LSQL…WVGS), and 348–368 (FIII…ILFP).

The protein belongs to the cytochrome b family. As to quaternary structure, the cytochrome bc1 complex contains 11 subunits: 3 respiratory subunits (MT-CYB, CYC1 and UQCRFS1), 2 core proteins (UQCRC1 and UQCRC2) and 6 low-molecular weight proteins (UQCRH/QCR6, UQCRB/QCR7, UQCRQ/QCR8, UQCR10/QCR9, UQCR11/QCR10 and a cleavage product of UQCRFS1). This cytochrome bc1 complex then forms a dimer. Heme b serves as cofactor.

The protein resides in the mitochondrion inner membrane. In terms of biological role, component of the ubiquinol-cytochrome c reductase complex (complex III or cytochrome b-c1 complex) that is part of the mitochondrial respiratory chain. The b-c1 complex mediates electron transfer from ubiquinol to cytochrome c. Contributes to the generation of a proton gradient across the mitochondrial membrane that is then used for ATP synthesis. The chain is Cytochrome b (MT-CYB) from Macronectes halli (Hall's giant petrel).